A 523-amino-acid chain; its full sequence is Sialate O-acetylesterase (523 aa).

The N-terminal stretch at 1-23 (MVAPGLVLGLVLPLILWADRSAG) is a signal peptide. 6 N-linked (GlcNAc...) asparagine glycosylation sites follow: Asn-107, Asn-138, Asn-267, Asn-290, Asn-401, and Asn-422.

It is found in the lysosome. The enzyme catalyses N-acetyl-9-O-acetylneuraminate + H2O = N-acetylneuraminate + acetate + H(+). It carries out the reaction an Ac-O-9-sialoglycoconjugate + H2O = a sialoglycoconjugate + acetate + H(+). Functionally, catalyzes the removal of O-acetyl ester groups from position 9 of the free diacetylated sialate N-acetyl-9-O-acetylneuraminate (Neu5,9Ac2) in the cytosol and of the diacetylated sialate residues of sialylglycoconjugates in the lysosomes. Together with the sialate-O-acetyltransferase they regulate the balance of acetylated sialoglycoconjugates, key players in various processes such as cell-cell interactions, host-pathogen recognition, and tumor antigenicity. The protein is Sialate O-acetylesterase (SIAE) of Pongo abelii (Sumatran orangutan).